The sequence spans 245 residues: tRNA (guanine-N(1)-)-methyltransferase (245 aa).

S-adenosyl-L-methionine-binding positions include glycine 111 and 131–136 (MGDYVL).

It belongs to the RNA methyltransferase TrmD family. Homodimer.

It localises to the cytoplasm. It carries out the reaction guanosine(37) in tRNA + S-adenosyl-L-methionine = N(1)-methylguanosine(37) in tRNA + S-adenosyl-L-homocysteine + H(+). In terms of biological role, specifically methylates guanosine-37 in various tRNAs. The polypeptide is tRNA (guanine-N(1)-)-methyltransferase (Staphylococcus epidermidis (strain ATCC 12228 / FDA PCI 1200)).